Reading from the N-terminus, the 310-residue chain is MRSITALFFLFCFLAPSALAQLRTGFYSRSCPRAESIVASVVANRFRSDKSITAAFLRMQFHDCFVRGCDASLLIDPRPGRPSEKSTGPNASVRGYEIIDEAKRQLEAACPRTVSCADIVTLATRDSVALAGGPRFSVPTGRRDGLRSNPNDVNLPGPTIPVSASIQLFAAQGMNTNDMVTLIGGGHSVGVAHCSLFQDRLSDRAMEPSLKSSLRRKCSSPNDPTTFLDQKTSFTVDNAIYGEIRRQRGILRIDQNLGLDRSTSGIVSGYASSNTLFRKRFAEALVKMGTIKVLTGRSGEIRRNCRVFNN.

The N-terminal stretch at 1–20 is a signal peptide; the sequence is MRSITALFFLFCFLAPSALA. 4 disulfides stabilise this stretch: cysteine 31-cysteine 110, cysteine 64-cysteine 69, cysteine 116-cysteine 305, and cysteine 194-cysteine 218. Catalysis depends on histidine 62, which acts as the Proton acceptor. Ca(2+) contacts are provided by aspartate 63, valine 66, glycine 68, aspartate 70, and serine 72. Residue proline 156 coordinates substrate. Histidine 187 contacts heme b. Serine 188 contacts Ca(2+). Aspartate 229, threonine 232, and aspartate 237 together coordinate Ca(2+).

The protein belongs to the peroxidase family. Classical plant (class III) peroxidase subfamily. The cofactor is heme b. Requires Ca(2+) as cofactor.

Its subcellular location is the secreted. The enzyme catalyses 2 a phenolic donor + H2O2 = 2 a phenolic radical donor + 2 H2O. Functionally, removal of H(2)O(2), oxidation of toxic reductants, biosynthesis and degradation of lignin, suberization, auxin catabolism, response to environmental stresses such as wounding, pathogen attack and oxidative stress. These functions might be dependent on each isozyme/isoform in each plant tissue. The chain is Peroxidase 44 (PER44) from Arabidopsis thaliana (Mouse-ear cress).